A 61-amino-acid chain; its full sequence is Small ribosomal subunit protein uS14 (61 aa).

The Zn(2+) site is built by cysteine 24, cysteine 27, cysteine 40, and cysteine 43.

Belongs to the universal ribosomal protein uS14 family. Zinc-binding uS14 subfamily. In terms of assembly, part of the 30S ribosomal subunit. Contacts proteins S3 and S10. It depends on Zn(2+) as a cofactor.

In terms of biological role, binds 16S rRNA, required for the assembly of 30S particles and may also be responsible for determining the conformation of the 16S rRNA at the A site. This Rubrobacter xylanophilus (strain DSM 9941 / JCM 11954 / NBRC 16129 / PRD-1) protein is Small ribosomal subunit protein uS14.